The chain runs to 210 residues: dITP/XTP pyrophosphatase (210 aa).

16–21 contacts substrate; sequence SNNKGK. Aspartate 79 acts as the Proton acceptor in catalysis. Aspartate 79 lines the Mg(2+) pocket. Substrate is bound by residues serine 80, 166–169, lysine 189, and 194–195; these read FGYD and HR.

The protein belongs to the HAM1 NTPase family. In terms of assembly, homodimer. It depends on Mg(2+) as a cofactor.

The catalysed reaction is XTP + H2O = XMP + diphosphate + H(+). It catalyses the reaction dITP + H2O = dIMP + diphosphate + H(+). It carries out the reaction ITP + H2O = IMP + diphosphate + H(+). Functionally, pyrophosphatase that catalyzes the hydrolysis of nucleoside triphosphates to their monophosphate derivatives, with a high preference for the non-canonical purine nucleotides XTP (xanthosine triphosphate), dITP (deoxyinosine triphosphate) and ITP. Seems to function as a house-cleaning enzyme that removes non-canonical purine nucleotides from the nucleotide pool, thus preventing their incorporation into DNA/RNA and avoiding chromosomal lesions. This Acinetobacter baylyi (strain ATCC 33305 / BD413 / ADP1) protein is dITP/XTP pyrophosphatase.